The sequence spans 280 residues: MLIKAYAKINLSLDVIGKREDGYHLLKMIMQTIDLYDLLNITPIEKGIEIKCNKSYIPCDKRNLVYKAVELFASNYGIKSGVSIDIIKNIPVAAGLAGGSSDAAAVLKVMRDIYIPELEYKDLIKLGTSIGADVPYCMIGGTALCQGIGEKVTSISSFKNHILVLVKPFFGVSTAEVYKSLDISKIKIHPNTDILINAINSGSLLKVSKNMKNVLENVTLKKHPLLRKIKNELIDFGALGALMSGSGPSIFAFFDDMLKAQICYDKMKTKYKEVFITRTV.

Lys-8 is an active-site residue. Residue 91–101 (PVAAGLAGGSS) participates in ATP binding. Asp-133 is an active-site residue.

Belongs to the GHMP kinase family. IspE subfamily.

The enzyme catalyses 4-CDP-2-C-methyl-D-erythritol + ATP = 4-CDP-2-C-methyl-D-erythritol 2-phosphate + ADP + H(+). The protein operates within isoprenoid biosynthesis; isopentenyl diphosphate biosynthesis via DXP pathway; isopentenyl diphosphate from 1-deoxy-D-xylulose 5-phosphate: step 3/6. Catalyzes the phosphorylation of the position 2 hydroxy group of 4-diphosphocytidyl-2C-methyl-D-erythritol. The protein is 4-diphosphocytidyl-2-C-methyl-D-erythritol kinase of Clostridium kluyveri (strain NBRC 12016).